Consider the following 565-residue polypeptide: MSQEFDYIIVGAGSAGNTLATRLTEDAGVTVLLLEAGGPDYRFDFRTQMPAALAFPLQGRRYNWAYETDPEPYMDGRRMECGRGKGLGGSSLINGMCYIRGNAMDFDGWAELPGLEDWTYLDCLPYFRKAETRDIGPNDYHGGEGPVSVTTPKAGNNPLFHAMVEAGVQAGYPRTEDLNGYQQEGFGPMDRTVTKNGRRSSTARGYLDQAKKRPNLTIVTHALTDRVLFDGKRAIGVTYLVGDSEERVEARARKEVIVSSGAIASPQLLQRSGVGPRALLESLDIPVVHDLPGVGENLQDHLELYLQYACTQPVSLYPSLLWWNQPAIGAEWMFNGTGIGASNQFEAGGFIRTRPEFKWPNIQYHFLPVAINYNGSNGVKEHGFQAHMGSMRSPARGRIQVKSKDPRQHPSILFNYMSTEQDWQEFRDGIRLTREIMAQPALDPYRGREISPGADVQTDEQLDKFIREHAETAFHPSCSCKMGTDDMAVVDGEGRVHGMKGLRVVDASIMPLIITGNLNATTIMIAEKISDKIRGRKPLPRSTAKYYVAGDAPVKGKPMREVKQG.

6–35 (DYIIVGAGSAGNTLATRLTEDAGVTVLLLE) lines the FAD pocket. Residues 182–201 (QQEGFGPMDRTVTKNGRRSS) are disordered. H475 serves as the catalytic Proton acceptor.

Belongs to the GMC oxidoreductase family. FAD is required as a cofactor.

The enzyme catalyses choline + A = betaine aldehyde + AH2. The catalysed reaction is betaine aldehyde + NAD(+) + H2O = glycine betaine + NADH + 2 H(+). The protein operates within amine and polyamine biosynthesis; betaine biosynthesis via choline pathway; betaine aldehyde from choline (cytochrome c reductase route): step 1/1. Involved in the biosynthesis of the osmoprotectant glycine betaine. Catalyzes the oxidation of choline to betaine aldehyde and betaine aldehyde to glycine betaine at the same rate. The polypeptide is Oxygen-dependent choline dehydrogenase (Pseudomonas putida (strain ATCC 47054 / DSM 6125 / CFBP 8728 / NCIMB 11950 / KT2440)).